The primary structure comprises 705 residues: DNA ligase (705 aa).

Residues 43–47 (DAEYD), 92–93 (SL), and Asp123 each bind NAD(+). The active-site N6-AMP-lysine intermediate is the Lys125. The NAD(+) site is built by Arg146, Glu184, Lys304, and Lys328. 4 residues coordinate Zn(2+): Cys422, Cys425, Cys440, and Cys445. Residues 607–696 (TPVTPLAGKK…EEISGQAADD (90 aa)) enclose the BRCT domain. Positions 684–705 (SESEEISGQAADDYENSLLRVQ) are disordered.

The protein belongs to the NAD-dependent DNA ligase family. LigA subfamily. Mg(2+) serves as cofactor. The cofactor is Mn(2+).

The enzyme catalyses NAD(+) + (deoxyribonucleotide)n-3'-hydroxyl + 5'-phospho-(deoxyribonucleotide)m = (deoxyribonucleotide)n+m + AMP + beta-nicotinamide D-nucleotide.. In terms of biological role, DNA ligase that catalyzes the formation of phosphodiester linkages between 5'-phosphoryl and 3'-hydroxyl groups in double-stranded DNA using NAD as a coenzyme and as the energy source for the reaction. It is essential for DNA replication and repair of damaged DNA. The chain is DNA ligase from Oleidesulfovibrio alaskensis (strain ATCC BAA-1058 / DSM 17464 / G20) (Desulfovibrio alaskensis).